The following is a 382-amino-acid chain: Homoserine O-acetyltransferase (382 aa).

The disordered stretch occupies residues 1 to 20; it reads MSTDQSPCPSATGAELLPPP. One can recognise an AB hydrolase-1 domain in the interval 59-363; sequence NVVLVEHALT…RDGHDGFLTE (305 aa). Ser164 functions as the Nucleophile in the catalytic mechanism. Residue Arg234 participates in substrate binding. Residues Asp327 and His357 contribute to the active site. Asp358 provides a ligand contact to substrate.

The protein belongs to the AB hydrolase superfamily. MetX family. Homodimer.

The protein resides in the cytoplasm. The enzyme catalyses L-homoserine + acetyl-CoA = O-acetyl-L-homoserine + CoA. Its pathway is amino-acid biosynthesis; L-methionine biosynthesis via de novo pathway; O-acetyl-L-homoserine from L-homoserine: step 1/1. Functionally, transfers an acetyl group from acetyl-CoA to L-homoserine, forming acetyl-L-homoserine. This is Homoserine O-acetyltransferase from Nocardia farcinica (strain IFM 10152).